The sequence spans 600 residues: Protein GPR107 (600 aa).

The N-terminal stretch at 1 to 39 (MAALAPVGSPASRGPRLAAGLRLLPMLGLLQLLAEPGLG) is a signal peptide. The Extracellular portion of the chain corresponds to 40–263 (RVHHLALKDD…YLSAGEIPLP (224 aa)). N-linked (GlcNAc...) asparagine glycosylation is found at Asn-70 and Asn-169. A disulfide bridge links Cys-109 with Cys-228. A compositionally biased stretch (polar residues) spans 157–175 (SQEPNVNPASAGNQTQKTQ). The disordered stretch occupies residues 157 to 185 (SQEPNVNPASAGNQTQKTQDGGKSKRSTV). Residues 176–185 (DGGKSKRSTV) are compositionally biased toward basic and acidic residues. N-linked (GlcNAc...) asparagine glycosylation occurs at Asn-211. A helical membrane pass occupies residues 264 to 284 (KLYISMAFFFFLSGTIWIHIL). Topologically, residues 285-293 (RKRRNDVFK) are cytoplasmic. A helical membrane pass occupies residues 294–314 (IHWLMAALPFTKSLSLVFHAI). Residues 315–337 (DYHYISSQGFPIEGWAVVYYITH) are Extracellular-facing. Residues 338–358 (LLKGALLFITIALIGTGWAFI) form a helical membrane-spanning segment. The Cytoplasmic segment spans residues 359–368 (KHILSDKDKK). Residues 369-389 (IFMIVIPLQVLANVAYIIIES) form a helical membrane-spanning segment. The Extracellular portion of the chain corresponds to 390–402 (TEEGTTEYGLWKD). Residues 403 to 423 (SLFLVDLLCCGAILFPVVWSI) traverse the membrane as a helical segment. The Cytoplasmic portion of the chain corresponds to 424-498 (RHLQEASATD…AKLKLFRHYY (75 aa)). A helical transmembrane segment spans residues 499 to 519 (VLIVCYIYFTRIIAFLLKLAV). Over 520 to 524 (PFQWK) the chain is Extracellular. Residues 525–544 (WLYQLLDETATLVFFVLTGY) traverse the membrane as a helical segment. Topologically, residues 545–600 (KFRPASDNPYLQLSQEEEDLEMESVVTTSGVMESMKKVKKVTNGSVEPQGEWEGAV) are cytoplasmic.

It belongs to the LU7TM family. In terms of processing, cleaved by FURIN to yield two fragments of 17 and 35 kDa that remain associated via a disulfide bond.

It localises to the cell membrane. The protein resides in the golgi apparatus. Its subcellular location is the trans-Golgi network membrane. Functionally, has been proposed to act as a receptor for neuronostatin, a peptide derived from the somatostatin/SST precursor. Involved in blood sugar regulation through the induction of glucagon in response to low glucose. In terms of biological role, (Microbial infection) Required for intoxication by Pseudomonas aeruginosa exotoxin A and Campylobacter jejuni CDT. May contribute to the retrograde transport of bacterial toxins, including cholera toxin, from the trans-Golgi network to the endoplasmic reticulum. This is Protein GPR107 (GPR107) from Homo sapiens (Human).